Here is a 474-residue protein sequence, read N- to C-terminus: tRNA-2-methylthio-N(6)-dimethylallyladenosine synthase (474 aa).

The MTTase N-terminal domain occupies 3 to 120 (KKLHIKTWGC…LPDMIEQVRR (118 aa)). [4Fe-4S] cluster-binding residues include Cys12, Cys49, Cys83, Cys157, Cys161, and Cys164. Residues 143 to 375 (RAEGPTAFVS…QDRITQQAMR (233 aa)) form the Radical SAM core domain. Residues 378–441 (RHMMGTVQRI…TNSLRGKFIR (64 aa)) form the TRAM domain.

Belongs to the methylthiotransferase family. MiaB subfamily. Monomer. [4Fe-4S] cluster is required as a cofactor.

It is found in the cytoplasm. It carries out the reaction N(6)-dimethylallyladenosine(37) in tRNA + (sulfur carrier)-SH + AH2 + 2 S-adenosyl-L-methionine = 2-methylsulfanyl-N(6)-dimethylallyladenosine(37) in tRNA + (sulfur carrier)-H + 5'-deoxyadenosine + L-methionine + A + S-adenosyl-L-homocysteine + 2 H(+). Catalyzes the methylthiolation of N6-(dimethylallyl)adenosine (i(6)A), leading to the formation of 2-methylthio-N6-(dimethylallyl)adenosine (ms(2)i(6)A) at position 37 in tRNAs that read codons beginning with uridine. The chain is tRNA-2-methylthio-N(6)-dimethylallyladenosine synthase from Shewanella sp. (strain MR-7).